Consider the following 253-residue polypeptide: Anamorsin homolog (253 aa).

The tract at residues phenylalanine 4–phenylalanine 129 is N-terminal SAM-like domain. Positions alanine 130 to lysine 161 are linker. Positions 172, 181, 184, and 186 each coordinate [2Fe-2S] cluster. Residues cysteine 172–cysteine 186 are fe-S binding site A. Residues cysteine 214, cysteine 217, cysteine 225, and cysteine 228 each coordinate [4Fe-4S] cluster. Short sequence motifs (cx2C motif) lie at residues cysteine 214–cysteine 217 and cysteine 225–cysteine 228. The tract at residues cysteine 214 to cysteine 228 is fe-S binding site B.

Belongs to the anamorsin family. In terms of assembly, monomer. Requires [2Fe-2S] cluster as cofactor. [4Fe-4S] cluster is required as a cofactor.

The protein resides in the cytoplasm. It is found in the mitochondrion intermembrane space. Functionally, component of the cytosolic iron-sulfur (Fe-S) protein assembly (CIA) machinery. Required for the maturation of extramitochondrial Fe-S proteins. Part of an electron transfer chain functioning in an early step of cytosolic Fe-S biogenesis, facilitating the de novo assembly of a [4Fe-4S] cluster on the cytosolic Fe-S scaffold complex. Electrons are transferred from NADPH via a FAD- and FMN-containing diflavin oxidoreductase. Together with the diflavin oxidoreductase, also required for the assembly of the diferric tyrosyl radical cofactor of ribonucleotide reductase (RNR), probably by providing electrons for reduction during radical cofactor maturation in the catalytic small subunit. The protein is Anamorsin homolog of Drosophila willistoni (Fruit fly).